Consider the following 173-residue polypeptide: MFIDKIKAKANNYEINVIIEIPMNSGPIKYEFDKESGAIFVDRFMQTTMSYPCNYGFIPHTLSNDGDPVDVLVVAHHPVVPGSVIKCRAVGVLMMEDESGLDEKIIAVPTSKLDITFDHIKELDDLCDMLKQRIVHFFEHYKDLEKGKWVKVTGWENKSKADALINEGIDRVS.

3 residues coordinate substrate: Lys29, Arg43, and Tyr55. Positions 65, 70, and 102 each coordinate Mg(2+). Tyr141 contacts substrate.

Belongs to the PPase family. As to quaternary structure, homohexamer. Requires Mg(2+) as cofactor.

It is found in the cytoplasm. The enzyme catalyses diphosphate + H2O = 2 phosphate + H(+). Functionally, catalyzes the hydrolysis of inorganic pyrophosphate (PPi) forming two phosphate ions. The chain is Inorganic pyrophosphatase from Rickettsia conorii (strain ATCC VR-613 / Malish 7).